The sequence spans 190 residues: Peptidyl-tRNA hydrolase (190 aa).

Tyr14 contacts tRNA. Catalysis depends on His19, which acts as the Proton acceptor. Positions 64, 66, and 112 each coordinate tRNA.

This sequence belongs to the PTH family. In terms of assembly, monomer.

It localises to the cytoplasm. The enzyme catalyses an N-acyl-L-alpha-aminoacyl-tRNA + H2O = an N-acyl-L-amino acid + a tRNA + H(+). Functionally, hydrolyzes ribosome-free peptidyl-tRNAs (with 1 or more amino acids incorporated), which drop off the ribosome during protein synthesis, or as a result of ribosome stalling. Its function is as follows. Catalyzes the release of premature peptidyl moieties from peptidyl-tRNA molecules trapped in stalled 50S ribosomal subunits, and thus maintains levels of free tRNAs and 50S ribosomes. The chain is Peptidyl-tRNA hydrolase from Chlorobium phaeobacteroides (strain DSM 266 / SMG 266 / 2430).